Here is a 37-residue protein sequence, read N- to C-terminus: Large ribosomal subunit protein bL36 (37 aa).

Belongs to the bacterial ribosomal protein bL36 family.

The chain is Large ribosomal subunit protein bL36 from Sulfurimonas denitrificans (strain ATCC 33889 / DSM 1251) (Thiomicrospira denitrificans (strain ATCC 33889 / DSM 1251)).